An 89-amino-acid chain; its full sequence is Small ribosomal subunit protein uS15 (89 aa).

It belongs to the universal ribosomal protein uS15 family. In terms of assembly, part of the 30S ribosomal subunit. Forms a bridge to the 50S subunit in the 70S ribosome, contacting the 23S rRNA.

Functionally, one of the primary rRNA binding proteins, it binds directly to 16S rRNA where it helps nucleate assembly of the platform of the 30S subunit by binding and bridging several RNA helices of the 16S rRNA. Its function is as follows. Forms an intersubunit bridge (bridge B4) with the 23S rRNA of the 50S subunit in the ribosome. The protein is Small ribosomal subunit protein uS15 of Colwellia psychrerythraea (strain 34H / ATCC BAA-681) (Vibrio psychroerythus).